A 223-amino-acid chain; its full sequence is Urease accessory protein UreF (223 aa).

The protein belongs to the UreF family. In terms of assembly, ureD, UreF and UreG form a complex that acts as a GTP-hydrolysis-dependent molecular chaperone, activating the urease apoprotein by helping to assemble the nickel containing metallocenter of UreC. The UreE protein probably delivers the nickel.

The protein localises to the cytoplasm. Functionally, required for maturation of urease via the functional incorporation of the urease nickel metallocenter. This is Urease accessory protein UreF from Agrobacterium fabrum (strain C58 / ATCC 33970) (Agrobacterium tumefaciens (strain C58)).